The chain runs to 387 residues: DNA primase small subunit PriS (387 aa).

Residues Asp-98, Asp-100, and Asp-289 contribute to the active site.

This sequence belongs to the eukaryotic-type primase small subunit family. As to quaternary structure, heterodimer of a small subunit (PriS) and a large subunit (PriL). The cofactor is Mg(2+). It depends on Mn(2+) as a cofactor.

Its function is as follows. Catalytic subunit of DNA primase, an RNA polymerase that catalyzes the synthesis of short RNA molecules used as primers for DNA polymerase during DNA replication. The small subunit contains the primase catalytic core and has DNA synthesis activity on its own. Binding to the large subunit stabilizes and modulates the activity, increasing the rate of DNA synthesis while decreasing the length of the DNA fragments, and conferring RNA synthesis capability. The DNA polymerase activity may enable DNA primase to also catalyze primer extension after primer synthesis. May also play a role in DNA repair. This is DNA primase small subunit PriS from Halorubrum lacusprofundi (strain ATCC 49239 / DSM 5036 / JCM 8891 / ACAM 34).